We begin with the raw amino-acid sequence, 425 residues long: Tyrosine--tRNA ligase (425 aa).

Y37 is a binding site for L-tyrosine. The 'HIGH' region motif lies at 42-51; it reads PTADSLHLGH. L-tyrosine contacts are provided by Y175 and Q179. The short motif at 235–239 is the 'KMSKS' region element; the sequence is KFGKT. K238 serves as a coordination point for ATP. The S4 RNA-binding domain occupies 357–415; the sequence is QDLQQALVNAELAPSRGQARKLIEAKSVSINGSLQTDAEYTFGEDDRLFGQYTLLRRGK.

Belongs to the class-I aminoacyl-tRNA synthetase family. TyrS type 1 subfamily. Homodimer.

It localises to the cytoplasm. It catalyses the reaction tRNA(Tyr) + L-tyrosine + ATP = L-tyrosyl-tRNA(Tyr) + AMP + diphosphate + H(+). In terms of biological role, catalyzes the attachment of tyrosine to tRNA(Tyr) in a two-step reaction: tyrosine is first activated by ATP to form Tyr-AMP and then transferred to the acceptor end of tRNA(Tyr). This is Tyrosine--tRNA ligase from Erwinia tasmaniensis (strain DSM 17950 / CFBP 7177 / CIP 109463 / NCPPB 4357 / Et1/99).